The primary structure comprises 889 residues: Alanine--tRNA ligase (889 aa).

Zn(2+) is bound by residues H564, H568, C677, and H681.

Belongs to the class-II aminoacyl-tRNA synthetase family. Zn(2+) serves as cofactor.

Its subcellular location is the cytoplasm. The enzyme catalyses tRNA(Ala) + L-alanine + ATP = L-alanyl-tRNA(Ala) + AMP + diphosphate. In terms of biological role, catalyzes the attachment of alanine to tRNA(Ala) in a two-step reaction: alanine is first activated by ATP to form Ala-AMP and then transferred to the acceptor end of tRNA(Ala). Also edits incorrectly charged Ser-tRNA(Ala) and Gly-tRNA(Ala) via its editing domain. The polypeptide is Alanine--tRNA ligase (Rhodopseudomonas palustris (strain ATCC BAA-98 / CGA009)).